The following is a 676-amino-acid chain: Methionine--tRNA ligase (676 aa).

The 'HIGH' region signature appears at 15–25 (PYANGPIHLGH). 4 residues coordinate Zn(2+): Cys-146, Cys-149, Cys-159, and Cys-162. A 'KMSKS' region motif is present at residues 332–336 (KMSKS). Lys-335 serves as a coordination point for ATP. The region spanning 575–676 (DFAKIDLRIA…EGAQPGMRVK (102 aa)) is the tRNA-binding domain.

Belongs to the class-I aminoacyl-tRNA synthetase family. MetG type 1 subfamily. Homodimer. Zn(2+) is required as a cofactor.

The protein localises to the cytoplasm. The enzyme catalyses tRNA(Met) + L-methionine + ATP = L-methionyl-tRNA(Met) + AMP + diphosphate. Its function is as follows. Is required not only for elongation of protein synthesis but also for the initiation of all mRNA translation through initiator tRNA(fMet) aminoacylation. This is Methionine--tRNA ligase from Shewanella sp. (strain MR-4).